The following is a 512-amino-acid chain: Ribose import ATP-binding protein RbsA 1 (512 aa).

ABC transporter domains are found at residues Phe8 to Glu244 and Pro257 to Gly502. Residue Gly40–Ser47 participates in ATP binding.

This sequence belongs to the ABC transporter superfamily. Ribose importer (TC 3.A.1.2.1) family. In terms of assembly, the complex is composed of an ATP-binding protein (RbsA), two transmembrane proteins (RbsC) and a solute-binding protein (RbsB).

It is found in the cell inner membrane. It carries out the reaction D-ribose(out) + ATP + H2O = D-ribose(in) + ADP + phosphate + H(+). Its function is as follows. Part of the ABC transporter complex RbsABC involved in ribose import. Responsible for energy coupling to the transport system. The chain is Ribose import ATP-binding protein RbsA 1 from Rhizobium etli (strain ATCC 51251 / DSM 11541 / JCM 21823 / NBRC 15573 / CFN 42).